Reading from the N-terminus, the 394-residue chain is Envelope glycoprotein D (394 aa).

Residues methionine 1 to serine 25 form the signal peptide. The interaction with TNFRSF14 stretch occupies residues lysine 26–proline 57. Residues lysine 26–methionine 340 are Virion surface-facing. Zn(2+) is bound at residue histidine 64. Intrachain disulfides connect cysteine 91–cysteine 214, cysteine 131–cysteine 227, and cysteine 143–cysteine 152. Residues asparagine 119 and asparagine 146 are each glycosylated (N-linked (GlcNAc...) asparagine; by host). Residue aspartate 240 participates in Zn(2+) binding. The segment at leucine 261–glutamate 305 is profusion. The disordered stretch occupies residues serine 275 to serine 301. Residue asparagine 287 is glycosylated (N-linked (GlcNAc...) asparagine; by host). Residues glycine 341–valine 361 form a helical membrane-spanning segment. Topologically, residues tyrosine 362–tyrosine 394 are intravirion. A disordered region spans residues isoleucine 375–tyrosine 394.

It belongs to the herpesviridae glycoprotein D family. As to quaternary structure, homodimer. Interacts with host receptor TNFRSF14. Interacts with host receptor NECTIN1. Interacts (via profusion domain) with gB; this interaction occurs in the absence of gH/gL. Interacts (via profusion domain) with gH/gL heterodimer; this interaction occurs in the absence of gB. Associates with the gB-gH/gL-gD complex. Interacts (via C-terminus) with UL11 tegument protein. Interacts (via C-terminus) with VP22 tegument protein; this interaction has been demonstrated in other strains, but might be very weak since PubMed:19279114 has failed to see it. Interacts with host RSAD2.

It is found in the virion membrane. The protein localises to the host Golgi apparatus. Its function is as follows. Envelope glycoprotein that binds to the host cell entry receptors NECTIN1, TNFRSF14/HVEM and 3-O-sulfated heparan sulfate, promoting the virus entry into host cells. May trigger fusion with host membrane, by recruiting the fusion machinery composed of gB and gH/gL. The sequence is that of Envelope glycoprotein D (gD) from Homo sapiens (Human).